We begin with the raw amino-acid sequence, 842 residues long: Serine/threonine-protein kinase CLA4 (842 aa).

A disordered region spans residues 12 to 34 (DNDFQNIGPAPRPPSSNSQGRTC). Residues serine 29 and serine 46 each carry the phosphoserine modification. One can recognise a PH domain in the interval 61 to 179 (SKKKSGWVSY…WLDAIFAKCP (119 aa)). In terms of domain architecture, CRIB spans 184–197 (VSSPTNFTHKVHVG). A compositionally biased stretch (polar residues) spans 247 to 274 (GNPTNTLDKPQSGETSSSQKSLPNSYND). The segment at 247 to 524 (GNPTNTLDKP…KPKKPARPTM (278 aa)) is disordered. Residues 279–296 (NNSVNSKSSSGVSSSMVS) are compositionally biased toward low complexity. A compositionally biased stretch (polar residues) spans 297–307 (QRKTSQPPNTK). A compositionally biased stretch (low complexity) spans 308 to 319 (SPVSLGSGSLPP). Residues 323–343 (KLPTSQSNIPRHLQNVPNQQY) show a composition bias toward polar residues. 2 positions are modified to phosphoserine: serine 351 and serine 367. A compositionally biased stretch (low complexity) spans 372 to 387 (QQQQQQQQQQKQQHQQ). The segment covering 396–408 (SPSPSPSPSPLNP) has biased composition (pro residues). A compositionally biased stretch (low complexity) spans 418–435 (PYSKQPQSPLSSQSTQNQ). Serine 425 carries the phosphoserine modification. 2 stretches are compositionally biased toward polar residues: residues 470–481 (PSNQNATSNTHV) and 488–497 (NDQSTPQTMR). Residues 546–825 (FKVIEKAGQG…TEELLHHGFF (280 aa)) form the Protein kinase domain. Residues 552–560 (AGQGASGSV) and lysine 594 contribute to the ATP site. The Proton acceptor role is filled by aspartate 693.

The protein belongs to the protein kinase superfamily. STE Ser/Thr protein kinase family. STE20 subfamily. In terms of assembly, interacts with CDC42.

The catalysed reaction is L-seryl-[protein] + ATP = O-phospho-L-seryl-[protein] + ADP + H(+). It catalyses the reaction L-threonyl-[protein] + ATP = O-phospho-L-threonyl-[protein] + ADP + H(+). Its function is as follows. Involved in budding and cytokinesis. This is Serine/threonine-protein kinase CLA4 (CLA4) from Saccharomyces cerevisiae (strain ATCC 204508 / S288c) (Baker's yeast).